Reading from the N-terminus, the 72-residue chain is Translation initiation factor IF-1 (72 aa).

The 72-residue stretch at 1-72 (MAKEDVIEVE…TRGRITYRFK (72 aa)) folds into the S1-like domain.

The protein belongs to the IF-1 family. As to quaternary structure, component of the 30S ribosomal translation pre-initiation complex which assembles on the 30S ribosome in the order IF-2 and IF-3, IF-1 and N-formylmethionyl-tRNA(fMet); mRNA recruitment can occur at any time during PIC assembly.

It localises to the cytoplasm. In terms of biological role, one of the essential components for the initiation of protein synthesis. Stabilizes the binding of IF-2 and IF-3 on the 30S subunit to which N-formylmethionyl-tRNA(fMet) subsequently binds. Helps modulate mRNA selection, yielding the 30S pre-initiation complex (PIC). Upon addition of the 50S ribosomal subunit IF-1, IF-2 and IF-3 are released leaving the mature 70S translation initiation complex. In Listeria innocua serovar 6a (strain ATCC BAA-680 / CLIP 11262), this protein is Translation initiation factor IF-1.